Here is a 124-residue protein sequence, read N- to C-terminus: Large ribosomal subunit protein uL18 (124 aa).

The protein belongs to the universal ribosomal protein uL18 family. As to quaternary structure, part of the 50S ribosomal subunit; part of the 5S rRNA/L5/L18/L25 subcomplex. Contacts the 5S and 23S rRNAs.

Its function is as follows. This is one of the proteins that bind and probably mediate the attachment of the 5S RNA into the large ribosomal subunit, where it forms part of the central protuberance. This is Large ribosomal subunit protein uL18 from Thermomicrobium roseum (strain ATCC 27502 / DSM 5159 / P-2).